We begin with the raw amino-acid sequence, 585 residues long: Potassium-transporting ATPase potassium-binding subunit (585 aa).

A run of 12 helical transmembrane segments spans residues 25–45, 84–104, 152–172, 194–214, 275–295, 307–327, 345–365, 368–388, 397–417, 437–457, 502–522, and 547–567; these read IIIF…SFYI, YFIN…LVIM, FVIT…SMAF, IFDL…LAGV, LEFV…GIVF, VIMF…YVGV, AIGV…STGA, GALV…LLLN, GVLN…LMVG, LSLV…LMIP, LDGV…LVIA, and LLLI…IIVL.

Belongs to the KdpA family. In terms of assembly, the system is composed of three essential subunits: KdpA, KdpB and KdpC.

It is found in the cell membrane. In terms of biological role, part of the high-affinity ATP-driven potassium transport (or Kdp) system, which catalyzes the hydrolysis of ATP coupled with the electrogenic transport of potassium into the cytoplasm. This subunit binds the extracellular potassium ions and delivers the ions to the membrane domain of KdpB through an intramembrane tunnel. This is Potassium-transporting ATPase potassium-binding subunit from Thermoplasma volcanium (strain ATCC 51530 / DSM 4299 / JCM 9571 / NBRC 15438 / GSS1).